The primary structure comprises 391 residues: MDSLGAVSTRLGFDLFKELKKTNDGNIFFSPVGILTAIGMVLLGTRGATASQLEEVFHSEKETKSSRIKAEEKEVIENTEAVHQQFQKFLTEISKLTNDYELNITNRLFGEKTYLFLQKYLDYVEKYYHASLEPVDFVNAADESRKKINSWVESKTNEKIKDLFPDGSISSSTKLVLVNMVYFKGQWDREFKKENTKEEKFWMNKSTSKSVQMMTQSHSFSFTFLEDLQAKILGIPYKNNDLSMFVLLPNDIDGLEKIIDKISPEKLVEWTSPGHMEERKVNLHLPRFEVEDGYDLEAVLAAMGMGDAFSEHKADYSGMSSGSGLYAQKFLHSSFVAVTEEGTEAAAATGIGFTVTSAPGHENVHCNHPFLFFIRHNESNSILFFGRFSSP.

This sequence belongs to the serpin family. Ov-serpin subfamily. In terms of tissue distribution, skin specific.

The protein localises to the cytoplasm. Functionally, may play a role in the proliferation or differentiation of keratinocytes. This chain is Serpin B13 (SERPINB13), found in Homo sapiens (Human).